A 270-amino-acid polypeptide reads, in one-letter code: UPF0162 protein PA3419 (270 aa).

It belongs to the UPF0162 family.

The protein is UPF0162 protein PA3419 of Pseudomonas aeruginosa (strain ATCC 15692 / DSM 22644 / CIP 104116 / JCM 14847 / LMG 12228 / 1C / PRS 101 / PAO1).